The following is a 255-amino-acid chain: MFKVDLNSDLGESFGAYKMGMDEEILKFVSSVNVACGFHAGDPCVMDETLNLAKQNGVCIGAHPSYPDLLGFGRRNMQISFEEAKNYALYQLGALFGFAKAKGMKIQHFKAHGALYNMAAIDENLALALCEAVASFDENIIFLGLSNSAMNEAAKKKGLRYANEVFADRAYNDDGTLVSRKLEGALIHDENLAIKRVIKMIKESKVTSINGKEIDLKADSICVHGDNAKALEFVKKIKENLKKEQIQICALENFI.

The protein belongs to the LamB/PxpA family. In terms of assembly, forms a complex composed of PxpA, PxpB and PxpC.

The catalysed reaction is 5-oxo-L-proline + ATP + 2 H2O = L-glutamate + ADP + phosphate + H(+). Functionally, catalyzes the cleavage of 5-oxoproline to form L-glutamate coupled to the hydrolysis of ATP to ADP and inorganic phosphate. The sequence is that of 5-oxoprolinase subunit A from Campylobacter jejuni subsp. jejuni serotype O:2 (strain ATCC 700819 / NCTC 11168).